We begin with the raw amino-acid sequence, 255 residues long: 5'-nucleotidase SurE (255 aa).

Residues Asp8, Asp9, Ser39, and Asn95 each coordinate a divalent metal cation.

Belongs to the SurE nucleotidase family. Requires a divalent metal cation as cofactor.

It localises to the cytoplasm. The enzyme catalyses a ribonucleoside 5'-phosphate + H2O = a ribonucleoside + phosphate. Nucleotidase that shows phosphatase activity on nucleoside 5'-monophosphates. The protein is 5'-nucleotidase SurE of Thermosipho africanus (strain TCF52B).